The primary structure comprises 274 residues: Pyrroline-5-carboxylate reductase 3 (274 aa).

Ala2 is subject to N-acetylalanine.

It belongs to the pyrroline-5-carboxylate reductase family. Homodecamer; composed of 5 homodimers.

Its subcellular location is the cytoplasm. It catalyses the reaction L-proline + NADP(+) = (S)-1-pyrroline-5-carboxylate + NADPH + 2 H(+). The enzyme catalyses L-proline + NAD(+) = (S)-1-pyrroline-5-carboxylate + NADH + 2 H(+). The protein operates within amino-acid biosynthesis; L-proline biosynthesis; L-proline from L-glutamate 5-semialdehyde: step 1/1. In terms of biological role, oxidoreductase that catalyzes the last step in proline biosynthesis, which corresponds to the reduction of pyrroline-5-carboxylate (P5C) to L-proline using NAD(P)H. Proline is synthesized from either glutamate or ornithine; both are converted to P5C, and then to proline via pyrroline-5-carboxylate reductases (PYCRs). PYCR3 is exclusively linked to the biosynthesis of proline from ornithine. The chain is Pyrroline-5-carboxylate reductase 3 from Rattus norvegicus (Rat).